The sequence spans 502 residues: MSKTQVVHYEKWQSFAGDLLVFPLGEKPEFSGDMKEIANIYNKLEATGDFSGKDGEAVLLYSSQLKKSICGAERILLLGLGKGDKDSDLQRDLLRQTGGLVAQKAAEIKATEVLVVIPTLAGRKSADTLEPLVEGVLLGDYRFLKYMSKKDAPAPYRGLKVLALSFAGAFDKALERISERAQLAADCGCAARDMAHEPGNGWTPKHFSRYAKKLAKSHSLVCTVLGKKKMKKMGMGGLLGVSQGSKESPQLVVLEYSPENPRKTVLMVGKGLTFDSGGVSLKPGAGMEEMKYDMCGGAAVICAMKAVAEEKPDVRVIAIVPATDNMAGGGALKPGDIISHYGGISSEVVNTDAEGRLILADALAYGVEKYCPDYVLDLATLTGAAIIALGHHHTALVSNSDHLVELATRAGAKAGEPVWRLPLTEEYRKQIKSEVADIKNVGGRPAGTITAAAYLEKFIGDTPWLHFDIAGTAWNFTEKKYIPKGPSGTGTRTLIEFIRSLG.

Mn(2+) contacts are provided by Lys270 and Asp275. Lys282 is a catalytic residue. Positions 293, 352, and 354 each coordinate Mn(2+). Residue Arg356 is part of the active site.

It belongs to the peptidase M17 family. Mn(2+) is required as a cofactor.

It is found in the cytoplasm. The enzyme catalyses Release of an N-terminal amino acid, Xaa-|-Yaa-, in which Xaa is preferably Leu, but may be other amino acids including Pro although not Arg or Lys, and Yaa may be Pro. Amino acid amides and methyl esters are also readily hydrolyzed, but rates on arylamides are exceedingly low.. It carries out the reaction Release of an N-terminal amino acid, preferentially leucine, but not glutamic or aspartic acids.. In terms of biological role, presumably involved in the processing and regular turnover of intracellular proteins. Catalyzes the removal of unsubstituted N-terminal amino acids from various peptides. The polypeptide is Probable cytosol aminopeptidase (Desulfotalea psychrophila (strain LSv54 / DSM 12343)).